We begin with the raw amino-acid sequence, 382 residues long: Mannitol-1-phosphate 5-dehydrogenase (382 aa).

Residue 3–14 (ALHFGAGNIGRG) coordinates NAD(+).

Belongs to the mannitol dehydrogenase family.

The catalysed reaction is D-mannitol 1-phosphate + NAD(+) = beta-D-fructose 6-phosphate + NADH + H(+). This is Mannitol-1-phosphate 5-dehydrogenase from Salmonella dublin (strain CT_02021853).